A 151-amino-acid polypeptide reads, in one-letter code: Large ribosomal subunit protein bL17 (151 aa).

Belongs to the bacterial ribosomal protein bL17 family. In terms of assembly, part of the 50S ribosomal subunit. Contacts protein L32.

In Chlorobium limicola (strain DSM 245 / NBRC 103803 / 6330), this protein is Large ribosomal subunit protein bL17.